Consider the following 211-residue polypeptide: Thiamine-phosphate synthase (211 aa).

Residues 36–40 (QLRDK) and Asn68 contribute to the 4-amino-2-methyl-5-(diphosphooxymethyl)pyrimidine site. Mg(2+) is bound by residues Asp69 and Asp88. Ser107 serves as a coordination point for 4-amino-2-methyl-5-(diphosphooxymethyl)pyrimidine. Residue 133–135 (TKS) coordinates 2-[(2R,5Z)-2-carboxy-4-methylthiazol-5(2H)-ylidene]ethyl phosphate. Lys136 is a 4-amino-2-methyl-5-(diphosphooxymethyl)pyrimidine binding site. Residues Gly164 and 184–185 (IS) contribute to the 2-[(2R,5Z)-2-carboxy-4-methylthiazol-5(2H)-ylidene]ethyl phosphate site.

Belongs to the thiamine-phosphate synthase family. Mg(2+) serves as cofactor.

The catalysed reaction is 2-[(2R,5Z)-2-carboxy-4-methylthiazol-5(2H)-ylidene]ethyl phosphate + 4-amino-2-methyl-5-(diphosphooxymethyl)pyrimidine + 2 H(+) = thiamine phosphate + CO2 + diphosphate. It carries out the reaction 2-(2-carboxy-4-methylthiazol-5-yl)ethyl phosphate + 4-amino-2-methyl-5-(diphosphooxymethyl)pyrimidine + 2 H(+) = thiamine phosphate + CO2 + diphosphate. The enzyme catalyses 4-methyl-5-(2-phosphooxyethyl)-thiazole + 4-amino-2-methyl-5-(diphosphooxymethyl)pyrimidine + H(+) = thiamine phosphate + diphosphate. Its pathway is cofactor biosynthesis; thiamine diphosphate biosynthesis; thiamine phosphate from 4-amino-2-methyl-5-diphosphomethylpyrimidine and 4-methyl-5-(2-phosphoethyl)-thiazole: step 1/1. Functionally, condenses 4-methyl-5-(beta-hydroxyethyl)thiazole monophosphate (THZ-P) and 2-methyl-4-amino-5-hydroxymethyl pyrimidine pyrophosphate (HMP-PP) to form thiamine monophosphate (TMP). This is Thiamine-phosphate synthase from Halalkalibacterium halodurans (strain ATCC BAA-125 / DSM 18197 / FERM 7344 / JCM 9153 / C-125) (Bacillus halodurans).